Consider the following 322-residue polypeptide: ATP-dependent 6-phosphofructokinase (322 aa).

An ATP-binding site is contributed by glycine 11. 21–25 lines the ADP pocket; sequence RAVTR. ATP-binding positions include 72-73 and 102-105; these read RC and GDGS. Aspartate 103 contributes to the Mg(2+) binding site. 127–129 provides a ligand contact to substrate; that stretch reads TID. Aspartate 129 acts as the Proton acceptor in catalysis. An ADP-binding site is contributed by arginine 156. Substrate-binding positions include arginine 164 and 171–173; that span reads MGR. ADP contacts are provided by residues 187 to 189, arginine 213, and 215 to 217; these read GAE and KKH. Substrate contacts are provided by residues glutamate 224, arginine 245, and 251 to 254; that span reads HIQR.

Belongs to the phosphofructokinase type A (PFKA) family. ATP-dependent PFK group I subfamily. Prokaryotic clade 'B1' sub-subfamily. Homotetramer. The cofactor is Mg(2+).

It localises to the cytoplasm. It catalyses the reaction beta-D-fructose 6-phosphate + ATP = beta-D-fructose 1,6-bisphosphate + ADP + H(+). The protein operates within carbohydrate degradation; glycolysis; D-glyceraldehyde 3-phosphate and glycerone phosphate from D-glucose: step 3/4. With respect to regulation, allosterically activated by ADP and other diphosphonucleosides, and allosterically inhibited by phosphoenolpyruvate. In terms of biological role, catalyzes the phosphorylation of D-fructose 6-phosphate to fructose 1,6-bisphosphate by ATP, the first committing step of glycolysis. This chain is ATP-dependent 6-phosphofructokinase, found in Staphylococcus epidermidis (strain ATCC 12228 / FDA PCI 1200).